The primary structure comprises 472 residues: Succinate-semialdehyde dehydrogenase [NADP(+)] (472 aa).

Residues 134–135 (WN), 158–161 (KHAS), and 210–211 (GS) contribute to the NADP(+) site. The Proton acceptor role is filled by glutamate 232. Leucine 233 contacts NADP(+). Cysteine 266 acts as the Nucleophile in catalysis. Glutamate 363 is an NADP(+) binding site.

This sequence belongs to the aldehyde dehydrogenase family.

The enzyme catalyses succinate semialdehyde + NADP(+) + H2O = succinate + NADPH + 2 H(+). Catalyzes the NADP(+)-dependent oxidation of succinate semialdehyde to succinate. It is believed to be the main source of succinate semialdehyde dehydrogenase activity in Mycobacterium. In Mycobacterium avium (strain 104), this protein is Succinate-semialdehyde dehydrogenase [NADP(+)] (gabD1).